The chain runs to 212 residues: MGKIWSKSSLVGWPEIRERMRRQTQEPAVEPAVGAGAASQDLANRGAITIRNTRDNNESIAWLEAQEEEEEVGFPVRPQVPLRPITYKQAFDLSFFLKDKGGLEGLVWSRKRQDILDLWMYHTQGILPDWHNYTPGPGIRYPVTFGWCFKLVPLSAEEVEEANEGDNNALLHPICQHGADDDHKEVLVWRFDSSLARRHVARELHPEFYKNC.

Gly-2 carries the N-myristoyl glycine; by host lipid modification. At Ser-6 the chain carries Phosphoserine; by host. The acidic; interacts with host PACS1 and PACS2; stabilizes the interaction of NEF/MHC-I with host AP1M1; necessary for MHC-I internalization stretch occupies residues 67-71 (EEEEE). The SH3-binding; interaction with Src family tyrosine kinases stretch occupies residues 75–84 (PVRPQVPLRP). The PxxP; stabilizes the interaction of NEF/MHC-I with host AP1M1; necessary for MHC-I internalization signature appears at 78–81 (PQVP). A mediates dimerization, Nef-PTE1 interaction region spans residues 114 to 130 (DILDLWMYHTQGILPDW). The segment at 154-186 (LSAEEVEEANEGDNNALLHPICQHGADDDHKEV) is binding to ATP6V1H. The Dileucine internalization motif; necessary for CD4 internalization signature appears at 170–171 (LL). The short motif at 180 to 181 (DD) is the Diacidic; necessary for CD4 internalization element.

It belongs to the lentivirus primate group Nef protein family. Monomer; cytosolic form. Homodimer; membrane bound form. Interacts with Nef associated p21-activated kinase (PAK2); this interaction activates PAK2. Associates with the Nef-MHC-I-AP1 complex; this complex is required for MHC-I internalization. Interacts (via C-terminus) with host PI3-kinase. Interacts with host PACS1; this interaction seems to be weak. Interacts with host PACS2. Interacts with host LCK and MAPK3; these interactions inhibit the kinase activity of the latter. Interacts with host ATP6V1H; this interaction may play a role in CD4 endocytosis. Associates with the CD4-Nef-AP2 complex; this complex is required for CD4 internalization. Interacts with host AP2 subunit alpha and AP2 subunit sigma2. Interacts with TCR-zeta chain; this interaction up-regulates the Fas ligand (FasL) surface expression. Interacts with host HCK, LYN, and SRC; these interactions activate the Src family kinases. Interacts with MAP3K5; this interaction inhibits the Fas and TNFR-mediated death signals. Interacts with beta-COP and PTE1. Interacts with human RACK1; this increases Nef phosphorylation by PKC. Interacts with TP53; this interaction decreases the half-life of TP53, protecting the infected cell against p53-mediated apoptosis. In terms of processing, the virion-associated Nef proteins are cleaved by the viral protease to release the soluble C-terminal core protein. Nef is probably cleaved concomitantly with viral structural proteins on maturation of virus particles. Post-translationally, myristoylated. Phosphorylated on serine residues, probably by host PKCdelta and theta.

It is found in the host cell membrane. It localises to the virion. The protein localises to the secreted. The protein resides in the host Golgi apparatus membrane. Functionally, factor of infectivity and pathogenicity, required for optimal virus replication. Alters numerous pathways of T-lymphocyte function and down-regulates immunity surface molecules in order to evade host defense and increase viral infectivity. Alters the functionality of other immunity cells, like dendritic cells, monocytes/macrophages and NK cells. Its function is as follows. In infected CD4(+) T-lymphocytes, down-regulates the surface MHC-I, mature MHC-II, CD4, CD28, CCR5 and CXCR4 molecules. Mediates internalization and degradation of host CD4 through the interaction of with the cytoplasmic tail of CD4, the recruitment of AP-2 (clathrin adapter protein complex 2), internalization through clathrin coated pits, and subsequent transport to endosomes and lysosomes for degradation. Diverts host MHC-I molecules to the trans-Golgi network-associated endosomal compartments by an endocytic pathway to finally target them for degradation. MHC-I down-regulation may involve AP-1 (clathrin adapter protein complex 1) or possibly Src family kinase-ZAP70/Syk-PI3K cascade recruited by PACS2. In consequence infected cells are masked for immune recognition by cytotoxic T-lymphocytes. Decreasing the number of immune receptors also prevents reinfection by more HIV particles (superinfection). Down-regulates host SERINC3 and SERINC5 thereby excluding these proteins from the viral particles. Virion infectivity is drastically higher when SERINC3 or SERINC5 are excluded from the viral envelope, because these host antiviral proteins impair the membrane fusion event necessary for subsequent virion penetration. Bypasses host T-cell signaling by inducing a transcriptional program nearly identical to that of anti-CD3 cell activation. Interaction with TCR-zeta chain up-regulates the Fas ligand (FasL). Increasing surface FasL molecules and decreasing surface MHC-I molecules on infected CD4(+) cells send attacking cytotoxic CD8+ T-lymphocytes into apoptosis. In terms of biological role, plays a role in optimizing the host cell environment for viral replication without causing cell death by apoptosis. Protects the infected cells from apoptosis in order to keep them alive until the next virus generation is ready to strike. Inhibits the Fas and TNFR-mediated death signals by blocking MAP3K5/ASK1. Decreases the half-life of TP53, protecting the infected cell against p53-mediated apoptosis. Inhibits the apoptotic signals regulated by the Bcl-2 family proteins through the formation of a Nef/PI3-kinase/PAK2 complex that leads to activation of PAK2 and induces phosphorylation of host BAD. Functionally, extracellular Nef protein targets CD4(+) T-lymphocytes for apoptosis by interacting with CXCR4 surface receptors. The polypeptide is Protein Nef (Human immunodeficiency virus type 1 group N (isolate YBF30) (HIV-1)).